The primary structure comprises 469 residues: 3-isopropylmalate dehydratase large subunit (469 aa).

3 residues coordinate [4Fe-4S] cluster: Cys347, Cys407, and Cys410.

The protein belongs to the aconitase/IPM isomerase family. LeuC type 1 subfamily. Heterodimer of LeuC and LeuD. [4Fe-4S] cluster is required as a cofactor.

The catalysed reaction is (2R,3S)-3-isopropylmalate = (2S)-2-isopropylmalate. Its pathway is amino-acid biosynthesis; L-leucine biosynthesis; L-leucine from 3-methyl-2-oxobutanoate: step 2/4. Functionally, catalyzes the isomerization between 2-isopropylmalate and 3-isopropylmalate, via the formation of 2-isopropylmaleate. In Proteus mirabilis (strain HI4320), this protein is 3-isopropylmalate dehydratase large subunit.